The chain runs to 644 residues: Karyogamy protein KAR9 (644 aa).

A Phosphoserine modification is found at Ser496. Disordered stretches follow at residues 506-534 (SVPP…PDSF) and 606-644 (PNSQ…TPTY). Basic and acidic residues-rich tracts occupy residues 523-534 (SRGENEKSPDSF) and 634-644 (REGRLDKTPTY).

The protein localises to the nucleus. The protein resides in the cytoplasm. It is found in the cytoskeleton. Involved in karyogamy. Component of a cortical adaptor complex that orients cytoplasmic microtubules. It may be involved in anchoring cytoplasmic microtubules to the cell cortex. In Saccharomyces cerevisiae (strain ATCC 204508 / S288c) (Baker's yeast), this protein is Karyogamy protein KAR9 (KAR9).